A 250-amino-acid chain; its full sequence is NAD-dependent protein deacylase (250 aa).

A Deacetylase sirtuin-type domain is found at 1–250 (MIVEVARVLA…VVHEVRRLLQ (250 aa)). 20 to 39 (GAGISAESGVPTFRGKDGLW) is a binding site for NAD(+). Substrate is bound by residues Tyr64 and Arg67. 98-101 (QNVD) contacts NAD(+). The Proton acceptor role is filled by His116. Zn(2+) contacts are provided by Cys124, Cys127, Cys150, and Cys153. Residues 190-192 (GTS), 216-218 (NVE), and Ala234 each bind NAD(+).

It belongs to the sirtuin family. Class III subfamily. Zn(2+) serves as cofactor.

It localises to the cytoplasm. It catalyses the reaction N(6)-acetyl-L-lysyl-[protein] + NAD(+) + H2O = 2''-O-acetyl-ADP-D-ribose + nicotinamide + L-lysyl-[protein]. The catalysed reaction is N(6)-succinyl-L-lysyl-[protein] + NAD(+) + H2O = 2''-O-succinyl-ADP-D-ribose + nicotinamide + L-lysyl-[protein]. Functionally, NAD-dependent lysine deacetylase and desuccinylase that specifically removes acetyl and succinyl groups on target proteins. Modulates the activities of several proteins which are inactive in their acylated form. Deacetylates the N-terminal lysine residue of Alba, the major archaeal chromatin protein and that, in turn, increases Alba's DNA binding affinity, thereby repressing transcription. The sequence is that of NAD-dependent protein deacylase from Pyrococcus abyssi (strain GE5 / Orsay).